Here is a 438-residue protein sequence, read N- to C-terminus: Cysteine--tRNA ligase (438 aa).

C28 serves as a coordination point for Zn(2+). A 'HIGH' region motif is present at residues 30 to 40 (PTVYNHLHLGN). The Zn(2+) site is built by C207, H232, and E236. A 'KMSKS' region motif is present at residues 264–268 (KMSKS). K267 provides a ligand contact to ATP.

The protein belongs to the class-I aminoacyl-tRNA synthetase family. In terms of assembly, monomer. Zn(2+) serves as cofactor.

The protein localises to the cytoplasm. It carries out the reaction tRNA(Cys) + L-cysteine + ATP = L-cysteinyl-tRNA(Cys) + AMP + diphosphate. This is Cysteine--tRNA ligase from Onion yellows phytoplasma (strain OY-M).